The chain runs to 104 residues: Flagellar hook-basal body complex protein FliE (104 aa).

It belongs to the FliE family.

Its subcellular location is the bacterial flagellum basal body. The sequence is that of Flagellar hook-basal body complex protein FliE from Escherichia coli O6:K15:H31 (strain 536 / UPEC).